Here is a 117-residue protein sequence, read N- to C-terminus: Fluoride-specific ion channel FluC 2 (117 aa).

4 consecutive transmembrane segments (helical) span residues 4–24 (FLIGIGGACGSIVRYKIGDII), 31–51 (KFPWGTFIINITGAFLLGIIT), 59–79 (LSMILADGFLGAYTTFSTFMY), and 94–114 (LIYILSSIIIGILGFYMGEFI). Residues G69 and T72 each coordinate Na(+).

This sequence belongs to the fluoride channel Fluc/FEX (TC 1.A.43) family.

Its subcellular location is the cell membrane. The catalysed reaction is fluoride(in) = fluoride(out). Na(+) is not transported, but it plays an essential structural role and its presence is essential for fluoride channel function. Fluoride-specific ion channel. Important for reducing fluoride concentration in the cell, thus reducing its toxicity. The sequence is that of Fluoride-specific ion channel FluC 2 from Clostridium acetobutylicum (strain ATCC 824 / DSM 792 / JCM 1419 / IAM 19013 / LMG 5710 / NBRC 13948 / NRRL B-527 / VKM B-1787 / 2291 / W).